Here is a 346-residue protein sequence, read N- to C-terminus: MAHRPRWTLSQVTELFEKPLLDLLFEAQQVHRQHFDPRQVQVSTLLSIKTGACPEDCKYCPQSSRYKTGLEAERLMEVEQVLESARKAKAAGSTRFCMGAAWKNPRERDMPYLEQMVQGVKAMGLEACMTLGTLSESQAQRLANAGLDYYNHNLDTSPEFYGNIITTRTYQERLDTLEKVREAGIKVCSGGIVGLGETVKDRAGLLLQLANLPTPPESVPINMLVKVKGTPLADNDDVDAFDFIRTIAVARIMMPTSYVRLSAGREQMNEQTQAMCFMAGANSIFYGCKLLTTPNPEEDKDLQLFRKLGLNPQQTAVLAGDNEQQQRLEQALMTPDTDEYYNAAAL.

In terms of domain architecture, Radical SAM core spans 38–256 (RQVQVSTLLS…IAVARIMMPT (219 aa)). Cys-53, Cys-57, and Cys-60 together coordinate [4Fe-4S] cluster. [2Fe-2S] cluster is bound by residues Cys-97, Cys-128, Cys-188, and Arg-260.

This sequence belongs to the radical SAM superfamily. Biotin synthase family. As to quaternary structure, homodimer. Requires [4Fe-4S] cluster as cofactor. It depends on [2Fe-2S] cluster as a cofactor.

It catalyses the reaction (4R,5S)-dethiobiotin + (sulfur carrier)-SH + 2 reduced [2Fe-2S]-[ferredoxin] + 2 S-adenosyl-L-methionine = (sulfur carrier)-H + biotin + 2 5'-deoxyadenosine + 2 L-methionine + 2 oxidized [2Fe-2S]-[ferredoxin]. The protein operates within cofactor biosynthesis; biotin biosynthesis; biotin from 7,8-diaminononanoate: step 2/2. In terms of biological role, catalyzes the conversion of dethiobiotin (DTB) to biotin by the insertion of a sulfur atom into dethiobiotin via a radical-based mechanism. The sequence is that of Biotin synthase from Escherichia coli O6:K15:H31 (strain 536 / UPEC).